Here is a 74-residue protein sequence, read N- to C-terminus: ATP synthase subunit c (74 aa).

The next 2 helical transmembrane spans lie at 13-33 and 51-71; these read ISVIALAGVGLGIGNIFASLI and ILGFALTEAVALFALLIAFLI.

Belongs to the ATPase C chain family. F-type ATPases have 2 components, F(1) - the catalytic core - and F(0) - the membrane proton channel. F(1) has five subunits: alpha(3), beta(3), gamma(1), delta(1), epsilon(1). F(0) has three main subunits: a(1), b(2) and c(10-14). The alpha and beta chains form an alternating ring which encloses part of the gamma chain. F(1) is attached to F(0) by a central stalk formed by the gamma and epsilon chains, while a peripheral stalk is formed by the delta and b chains.

Its subcellular location is the cell inner membrane. Functionally, f(1)F(0) ATP synthase produces ATP from ADP in the presence of a proton or sodium gradient. F-type ATPases consist of two structural domains, F(1) containing the extramembraneous catalytic core and F(0) containing the membrane proton channel, linked together by a central stalk and a peripheral stalk. During catalysis, ATP synthesis in the catalytic domain of F(1) is coupled via a rotary mechanism of the central stalk subunits to proton translocation. Key component of the F(0) channel; it plays a direct role in translocation across the membrane. A homomeric c-ring of between 10-14 subunits forms the central stalk rotor element with the F(1) delta and epsilon subunits. This Granulibacter bethesdensis (strain ATCC BAA-1260 / CGDNIH1) protein is ATP synthase subunit c.